The following is a 135-amino-acid chain: Actin-related protein 2/3 complex subunit 5B (135 aa).

It belongs to the ARPC5 family. In terms of assembly, component of the Arp2/3 complex composed of ARP2, ARP3, ARPC1/p41-ARC, ARPC2/p34-ARC, ARPC3/p21-ARC, ARPC4/p20-ARC and ARPC5/p16-ARC.

The protein localises to the cytoplasm. It localises to the cytoskeleton. Its subcellular location is the cell projection. Functions as a component of the Arp2/3 complex which is involved in regulation of actin polymerization and together with an activating nucleation-promoting factor (NPF) mediates the formation of branched actin networks. Arp2/3 complex plays a critical role in the control of cell morphogenesis via the modulation of cell polarity development. The chain is Actin-related protein 2/3 complex subunit 5B (ARPC5B) from Arabidopsis thaliana (Mouse-ear cress).